We begin with the raw amino-acid sequence, 498 residues long: Actin-binding protein WASF2 (498 aa).

2 disordered regions span residues Lys173–Trp203 and Asn240–Asp435. Positions Ser252–Ser263 are enriched in low complexity. A compositionally biased stretch (pro residues) spans Ser298–Phe407. The WH2 domain maps to Ala436–Val453. Position 474 is a phosphoserine (Ser474).

This sequence belongs to the SCAR/WAVE family. In terms of assembly, binds actin and the Arp2/3 complex. Interacts with BAIAP2. Component of the WAVE2 complex composed of ABI1, CYFIP1/SRA1, NCKAP1/NAP1 (NCKAP1l/HEM1 in hematopoietic cells) and WASF2/WAVE2. Directly interacts with BRK1. Interacts with FNBP1L (via the SH3 domain). (Microbial infection) Interacts with human cytomegalovirus protein UL135. As to expression, expressed in all tissues with strongest expression in placenta, lung, and peripheral blood leukocytes, but not in skeletal muscle.

The protein resides in the cytoplasm. It is found in the cytoskeleton. It localises to the cell projection. Its subcellular location is the lamellipodium. The protein localises to the basolateral cell membrane. Downstream effector molecule involved in the transmission of signals from tyrosine kinase receptors and small GTPases to the actin cytoskeleton. Promotes formation of actin filaments. Part of the WAVE complex that regulates lamellipodia formation. The WAVE complex regulates actin filament reorganization via its interaction with the Arp2/3 complex. The sequence is that of Actin-binding protein WASF2 from Homo sapiens (Human).